Consider the following 780-residue polypeptide: Striatin (780 aa).

Residues 53–120 are a coiled coil; the sequence is LHFLQHEWAR…QERAKYHKLK (68 aa). A caveolin-binding region spans residues 55–63; the sequence is FLQHEWARF. Residues 123–150 form a disordered region; it reads TELNQGDMKPPSYDSDEGNETEVQPQQN. Ser-137 carries the post-translational modification Phosphoserine. Positions 149 to 166 are calmodulin-binding; it reads QNSQLMWKQGRQLLRQYL. Thr-225 carries the phosphothreonine modification. 4 positions are modified to phosphoserine: Ser-227, Ser-229, Ser-245, and Ser-259. 3 disordered regions span residues 289-312, 334-353, and 364-392; these read DFLV…DWEK, EQYK…NRSK, and VDEL…ELSR. Residues 299–312 are compositionally biased toward basic and acidic residues; it reads NESRSAGDGTDWEK. Basic residues predominate over residues 338-351; it reads KERKGKKGVKRPNR. 6 WD repeats span residues 461-500, 514-553, 567-606, 662-701, 704-743, and 750-780; these read SHFD…PAKK, AHKG…VDPY, GHTD…PALS, SSSC…LIHS, AHLE…CIQE, and KFEE…KVFV.

This sequence belongs to the WD repeat striatin family. In terms of assembly, part of the core of STRIPAK complexes composed of PP2A catalytic and scaffolding subunits, the striatins (PP2A regulatory subunits), the striatin-associated proteins MOB4, STRIP1 and STRIP2, PDCD10 and members of the STE20 kinases, such as STK24 and STK26. Interacts with CTTNBP2; this interaction may regulate dendritic spine distribution of STRN. Activation of glutamate receptors weakens the interaction with CTTNBP2. Mainly expressed in brain but is also expressed at low levels in various tissues such as kidney, spleen, skeletal muscle and lung.

The protein localises to the cytoplasm. It is found in the membrane. It localises to the cell projection. The protein resides in the dendritic spine. In terms of biological role, calmodulin-binding scaffolding protein which is the center of the striatin-interacting phosphatase and kinase (STRIPAK) complexes. STRIPAK complexes have critical roles in protein (de)phosphorylation and are regulators of multiple signaling pathways including Hippo, MAPK, nuclear receptor and cytoskeleton remodeling. Different types of STRIPAK complexes are involved in a variety of biological processes such as cell growth, differentiation, apoptosis, metabolism and immune regulation. The chain is Striatin (Strn) from Mus musculus (Mouse).